The primary structure comprises 871 residues: Coatomer subunit gamma-2 (871 aa).

Basic and acidic residues predominate over residues 1–11 (MIKKFDKKDEE). The disordered stretch occupies residues 1–20 (MIKKFDKKDEESGSGSNPFR). HEAT repeat units follow at residues 64–101 (TEAT…ISED), 283–320 (RELA…KHPS), 321–355 (AVTA…GSES), 356–392 (SVDR…KYPR), 395–430 (SVMM…ENPE), and 467–504 (PVPS…QNEN). Threonine 594 is subject to Phosphothreonine.

It belongs to the COPG family. As to quaternary structure, oligomeric complex. Binds to CDC42. Interacts with JAGN1. Interacts with TMED10 (via cytoplasmic domain).

The protein resides in the cytoplasm. Its subcellular location is the cytosol. It is found in the golgi apparatus membrane. It localises to the cytoplasmic vesicle. The protein localises to the COPI-coated vesicle membrane. In terms of biological role, the coatomer is a cytosolic protein complex that binds to dilysine motifs and reversibly associates with Golgi non-clathrin-coated vesicles, which further mediate biosynthetic protein transport from the ER, via the Golgi up to the trans Golgi network. Coatomer complex is required for budding from Golgi membranes, and is essential for the retrograde Golgi-to-ER transport of dilysine-tagged proteins. In mammals, the coatomer can only be recruited by membranes associated to ADP-ribosylation factors (ARFs), which are small GTP-binding proteins; the complex also influences the Golgi structural integrity, as well as the processing, activity, and endocytic recycling of LDL receptors. The sequence is that of Coatomer subunit gamma-2 (COPG2) from Bos taurus (Bovine).